The primary structure comprises 73 residues: Large ribosomal subunit protein bL31 (73 aa).

Zn(2+) is bound by residues cysteine 16, cysteine 18, cysteine 37, and cysteine 40.

Belongs to the bacterial ribosomal protein bL31 family. Type A subfamily. Part of the 50S ribosomal subunit. It depends on Zn(2+) as a cofactor.

Functionally, binds the 23S rRNA. This is Large ribosomal subunit protein bL31 from Hamiltonella defensa subsp. Acyrthosiphon pisum (strain 5AT).